A 336-amino-acid polypeptide reads, in one-letter code: MFLTLIAAIISFMVSAFTMPYFIKFYQLKKIGGQQMHEDVKQHLAKAGTPTMGGTVFLLVATAVSLLVSLFSIKNTQSLALISGILSIVVIYGIIGFLDDFLKIFKQINEGLTAKQKLALQLAGGLMFYFLHVSPSGISSINVFGYQLSLGIFYLFFVLFWVVGFSNAVNLTDGIDGLASISVVISLVTYGVIAYVQGQFDVLLLIGTMIGALLGFFCFNHKPAKVFMGDVGSLALGAMLAAISIALRQEWTLLIIGIVYVLETSSVMLQVSYFKYTKKKYGEGRRIFRMTPFHHHLELGGLSGKGKKWSEWQVDAFLWGVGSLASLLVLAILYVF.

10 helical membrane-spanning segments follow: residues 3 to 23, 53 to 73, 78 to 98, 118 to 138, 143 to 163, 174 to 194, 200 to 220, 226 to 246, 251 to 271, and 316 to 336; these read LTLI…PYFI, GGTV…LFSI, SLAL…IGFL, LALQ…PSGI, VFGY…FWVV, GIDG…GVIA, FDVL…FCFN, VFMG…ISIA, WTLL…MLQV, and AFLW…LYVF.

Belongs to the glycosyltransferase 4 family. MraY subfamily. Mg(2+) is required as a cofactor.

Its subcellular location is the cell membrane. It carries out the reaction UDP-N-acetyl-alpha-D-muramoyl-L-alanyl-gamma-D-glutamyl-L-lysyl-D-alanyl-D-alanine + di-trans,octa-cis-undecaprenyl phosphate = Mur2Ac(oyl-L-Ala-gamma-D-Glu-L-Lys-D-Ala-D-Ala)-di-trans,octa-cis-undecaprenyl diphosphate + UMP. It participates in cell wall biogenesis; peptidoglycan biosynthesis. Its function is as follows. Catalyzes the initial step of the lipid cycle reactions in the biosynthesis of the cell wall peptidoglycan: transfers peptidoglycan precursor phospho-MurNAc-pentapeptide from UDP-MurNAc-pentapeptide onto the lipid carrier undecaprenyl phosphate, yielding undecaprenyl-pyrophosphoryl-MurNAc-pentapeptide, known as lipid I. This chain is Phospho-N-acetylmuramoyl-pentapeptide-transferase, found in Streptococcus pyogenes serotype M4 (strain MGAS10750).